The chain runs to 235 residues: uncharacterized protein (235 aa).

The first 24 residues, 1-24 (MSDRMKLKGLLAFCLLFLSSFVLA), serve as a signal peptide directing secretion.

This is an uncharacterized protein from Haemophilus influenzae (strain ATCC 51907 / DSM 11121 / KW20 / Rd).